Consider the following 122-residue polypeptide: Small ribosomal subunit protein uS13 (122 aa).

The disordered stretch occupies residues 89-122; that stretch reads GLRHRRGLPARGQRTKTNARTRKGPRRGVAGKRK.

It belongs to the universal ribosomal protein uS13 family. As to quaternary structure, part of the 30S ribosomal subunit. Forms a loose heterodimer with protein S19. Forms two bridges to the 50S subunit in the 70S ribosome.

Located at the top of the head of the 30S subunit, it contacts several helices of the 16S rRNA. In the 70S ribosome it contacts the 23S rRNA (bridge B1a) and protein L5 of the 50S subunit (bridge B1b), connecting the 2 subunits; these bridges are implicated in subunit movement. Contacts the tRNAs in the A and P-sites. The chain is Small ribosomal subunit protein uS13 from Oleidesulfovibrio alaskensis (strain ATCC BAA-1058 / DSM 17464 / G20) (Desulfovibrio alaskensis).